The primary structure comprises 270 residues: MSNQHSPQPFCLDTKLVKLLEELQEGKQFNNKNIFPEKALYLKLALDYSFFRKNLLEFCVHLDKIKGVIRPNYDTIYILCLLEVDLLNLVFTDNILEICLPRFVSREDLRVFNNTFYTYHDNRLRILQEDFSQLFKKIKTKASVLCFTVEEIFLTNQEILPQNSTVAELQKSTNKVQTNGPQRHDFIVTLEIKLNKTQITFLIGAKGTRIESLREKSGASIKIIPISDKMTAHERNHPESVQQTILISGDLYSIALAVTSIESALITLDL.

The KH domain occupies 191-225; the sequence is EIKLNKTQITFLIGAKGTRIESLREKSGASIKIIP.

Functionally, required for chromosome pairing and genetic recombination. MER1 may function to bring the axial elements of the synaptonemal complex corresponding to homologous chromosomes together by initiating recombination. MER1 might be responsible for regulating the MER2 gene and/or gene product. The polypeptide is Meiotic recombination 1 protein (MER1) (Saccharomyces cerevisiae (strain ATCC 204508 / S288c) (Baker's yeast)).